Reading from the N-terminus, the 130-residue chain is Small ribosomal subunit protein uS11 (130 aa).

The protein belongs to the universal ribosomal protein uS11 family. In terms of assembly, part of the 30S ribosomal subunit. Interacts with proteins S7 and S18. Binds to IF-3.

In terms of biological role, located on the platform of the 30S subunit, it bridges several disparate RNA helices of the 16S rRNA. Forms part of the Shine-Dalgarno cleft in the 70S ribosome. This is Small ribosomal subunit protein uS11 from Alkalilimnicola ehrlichii (strain ATCC BAA-1101 / DSM 17681 / MLHE-1).